A 188-amino-acid polypeptide reads, in one-letter code: dCTP deaminase (188 aa).

DCTP contacts are provided by residues 111–116, 135–137, Q156, Y170, and Q180; these read KSTYAR and TLE. E137 functions as the Proton donor/acceptor in the catalytic mechanism.

The protein belongs to the dCTP deaminase family. As to quaternary structure, homotrimer.

It catalyses the reaction dCTP + H2O + H(+) = dUTP + NH4(+). The protein operates within pyrimidine metabolism; dUMP biosynthesis; dUMP from dCTP (dUTP route): step 1/2. Functionally, catalyzes the deamination of dCTP to dUTP. In Pseudomonas putida (strain ATCC 700007 / DSM 6899 / JCM 31910 / BCRC 17059 / LMG 24140 / F1), this protein is dCTP deaminase.